Consider the following 359-residue polypeptide: Pyruvate dehydrogenase E1 component subunit beta, mitochondrial (359 aa).

The N-terminal 30 residues, 1-30 (MAAVSGLVRRPLREVSGLLKRRFHWTAPAA), are a transit peptide targeting the mitochondrion. A Phosphotyrosine modification is found at tyrosine 67. Position 89 (glutamate 89) interacts with thiamine diphosphate. The K(+) site is built by isoleucine 142, alanine 190, isoleucine 191, aspartate 193, and asparagine 195. Lysine 354 is subject to N6-acetyllysine.

Heterotetramer of two PDHA1 and two PDHB subunits. The heterotetramer interacts with DLAT, and is part of the multimeric pyruvate dehydrogenase complex that contains multiple copies of pyruvate dehydrogenase (E1), dihydrolipoamide acetyltransferase (DLAT, E2) and lipoamide dehydrogenase (DLD, E3). These subunits are bound to an inner core composed of about 48 DLAT and 12 PDHX molecules. Interacts with DLAT. Requires thiamine diphosphate as cofactor.

The protein resides in the mitochondrion matrix. The enzyme catalyses N(6)-[(R)-lipoyl]-L-lysyl-[protein] + pyruvate + H(+) = N(6)-[(R)-S(8)-acetyldihydrolipoyl]-L-lysyl-[protein] + CO2. Its function is as follows. The pyruvate dehydrogenase complex catalyzes the overall conversion of pyruvate to acetyl-CoA and CO(2), and thereby links the glycolytic pathway to the tricarboxylic cycle. The protein is Pyruvate dehydrogenase E1 component subunit beta, mitochondrial (PDHB) of Homo sapiens (Human).